The primary structure comprises 119 residues: Large ribosomal subunit protein uL18 (119 aa).

This sequence belongs to the universal ribosomal protein uL18 family. Part of the 50S ribosomal subunit; part of the 5S rRNA/L5/L18/L25 subcomplex. Contacts the 5S and 23S rRNAs.

Functionally, this is one of the proteins that bind and probably mediate the attachment of the 5S RNA into the large ribosomal subunit, where it forms part of the central protuberance. The protein is Large ribosomal subunit protein uL18 of Sorangium cellulosum (strain So ce56) (Polyangium cellulosum (strain So ce56)).